Reading from the N-terminus, the 358-residue chain is tRNA N6-adenosine threonylcarbamoyltransferase (358 aa).

Fe cation-binding residues include histidine 111 and histidine 115. Residues 146–150 (LVSGG), aspartate 179, glycine 192, and asparagine 294 contribute to the substrate site. Aspartate 322 lines the Fe cation pocket.

The protein belongs to the KAE1 / TsaD family. It depends on Fe(2+) as a cofactor.

The protein resides in the cytoplasm. The enzyme catalyses L-threonylcarbamoyladenylate + adenosine(37) in tRNA = N(6)-L-threonylcarbamoyladenosine(37) in tRNA + AMP + H(+). Its function is as follows. Required for the formation of a threonylcarbamoyl group on adenosine at position 37 (t(6)A37) in tRNAs that read codons beginning with adenine. Is involved in the transfer of the threonylcarbamoyl moiety of threonylcarbamoyl-AMP (TC-AMP) to the N6 group of A37, together with TsaE and TsaB. TsaD likely plays a direct catalytic role in this reaction. The protein is tRNA N6-adenosine threonylcarbamoyltransferase of Helicobacter hepaticus (strain ATCC 51449 / 3B1).